Here is a 388-residue protein sequence, read N- to C-terminus: Alanine racemase (388 aa).

Lysine 44 (proton acceptor; specific for D-alanine) is an active-site residue. At lysine 44 the chain carries N6-(pyridoxal phosphate)lysine. Position 142 (arginine 142) interacts with substrate. Tyrosine 273 serves as the catalytic Proton acceptor; specific for L-alanine. Position 321 (methionine 321) interacts with substrate.

The protein belongs to the alanine racemase family. It depends on pyridoxal 5'-phosphate as a cofactor.

It catalyses the reaction L-alanine = D-alanine. It participates in amino-acid biosynthesis; D-alanine biosynthesis; D-alanine from L-alanine: step 1/1. Catalyzes the interconversion of L-alanine and D-alanine. May also act on other amino acids. This is Alanine racemase (alr) from Mycobacterium leprae (strain TN).